We begin with the raw amino-acid sequence, 511 residues long: MGDHTYKKKDSGIYDALNMLVYDYLLKMKYEGSAKIFFNEAGLENFKPGEGMPILAQWYAAFHDISAVRSGLSSNLQDLNRIEGIMMKLENEKRRYQHIGRIDPGAMGYGGTVDPYKQYPMYYQQFDQRKMYEMYGQMSPTADATPRFYDPRKGSMPGPGYRAAQGYPRYHPRFEEQGVPPAKMAPKQFRDEGRSGNVESPSIATNQEGSSPLFESVLGGGDRQFGLKEVMLFVPSEHTAVCSAVAGEHKILLVASSNKTITAVNLLSGKNESTVETDEKQVVEMKIREYEDEIIVVCGIADNELLLVRCTMKGSANLEIAGILRGHTASIVSFEVLDSIHSLDSGGIMRKWTLNGVFEREEVLSGEILHICCISEDNFMFADRQRVYVYDFELNIEMMEILKGQALGIKRIKDGFIVVFRNQAIWLDKRIQKVKVLNVNESIRTATLIDGDLVAASSQNVWFDNGKSLAKIKLHETGIVALDGVNVFRKPSVISCSASGECKIWIKYVGD.

Residues Ile-13 to Asn-45 enclose the LisH domain. The interval Pro-172 to Pro-212 is disordered. The segment covering Asn-197–Ser-210 has biased composition (polar residues).

This is an uncharacterized protein from Encephalitozoon cuniculi (strain GB-M1) (Microsporidian parasite).